A 59-amino-acid chain; its full sequence is Large ribosomal subunit protein bL33 (59 aa).

Positions 26 to 59 are disordered; the sequence is RYTTTKNKKNNTERLVLKKYNPNLKKHTEHKEIK.

This sequence belongs to the bacterial ribosomal protein bL33 family.

The sequence is that of Large ribosomal subunit protein bL33 from Chlorobium phaeobacteroides (strain BS1).